The following is a 502-amino-acid chain: ATP synthase subunit alpha (502 aa).

169–176 is a binding site for ATP; that stretch reads GDRQTGKT.

The protein belongs to the ATPase alpha/beta chains family. As to quaternary structure, F-type ATPases have 2 components, CF(1) - the catalytic core - and CF(0) - the membrane proton channel. CF(1) has five subunits: alpha(3), beta(3), gamma(1), delta(1), epsilon(1). CF(0) has three main subunits: a(1), b(2) and c(9-12). The alpha and beta chains form an alternating ring which encloses part of the gamma chain. CF(1) is attached to CF(0) by a central stalk formed by the gamma and epsilon chains, while a peripheral stalk is formed by the delta and b chains.

The protein localises to the cell inner membrane. It catalyses the reaction ATP + H2O + 4 H(+)(in) = ADP + phosphate + 5 H(+)(out). In terms of biological role, produces ATP from ADP in the presence of a proton gradient across the membrane. The alpha chain is a regulatory subunit. The protein is ATP synthase subunit alpha of Geotalea uraniireducens (strain Rf4) (Geobacter uraniireducens).